Here is a 92-residue protein sequence, read N- to C-terminus: Small ribosomal subunit protein uS19 (92 aa).

A disordered region spans residues 1 to 27 (MARSIKKGPFADDHLKKKVEAQSGSEK). A compositionally biased stretch (basic and acidic residues) spans 9–27 (PFADDHLKKKVEAQSGSEK).

The protein belongs to the universal ribosomal protein uS19 family.

Functionally, protein S19 forms a complex with S13 that binds strongly to the 16S ribosomal RNA. This is Small ribosomal subunit protein uS19 from Staphylococcus saprophyticus subsp. saprophyticus (strain ATCC 15305 / DSM 20229 / NCIMB 8711 / NCTC 7292 / S-41).